A 416-amino-acid chain; its full sequence is Squalene synthase (416 aa).

NADP(+) is bound by residues Arg-52 and Arg-77. The Mg(2+) site is built by Asp-80, Glu-83, and Asp-84. Arg-218 serves as a coordination point for NADP(+). Residues 284-304 (SVFNFCAIPQVMAIATLAACY) form a helical membrane-spanning segment. Residues Lys-315 and Arg-317 each contribute to the NADP(+) site. The helical transmembrane segment at 384–404 (PIYLSFIMLLAALSWQYLSTL) threads the bilayer.

The protein belongs to the phytoene/squalene synthase family. The cofactor is Mg(2+).

The protein resides in the endoplasmic reticulum membrane. The enzyme catalyses 2 (2E,6E)-farnesyl diphosphate + NADPH + H(+) = squalene + 2 diphosphate + NADP(+). The catalysed reaction is 2 (2E,6E)-farnesyl diphosphate + NADH + H(+) = squalene + 2 diphosphate + NAD(+). It carries out the reaction presqualene diphosphate + NADH + H(+) = squalene + diphosphate + NAD(+). It catalyses the reaction presqualene diphosphate + NADPH + H(+) = squalene + diphosphate + NADP(+). The enzyme catalyses 2 (2E,6E)-farnesyl diphosphate = presqualene diphosphate + diphosphate. It functions in the pathway terpene metabolism; lanosterol biosynthesis; lanosterol from farnesyl diphosphate: step 1/3. Catalyzes the condensation of 2 farnesyl pyrophosphate (FPP) moieties to form squalene. Proceeds in two distinct steps. In the first half-reaction, two molecules of FPP react to form the stable presqualene diphosphate intermediate (PSQPP), with concomitant release of a proton and a molecule of inorganic diphosphate. In the second half-reaction, PSQPP undergoes heterolysis, isomerization, and reduction with NADPH or NADH to form squalene. It is the first committed enzyme of the sterol biosynthesis pathway. The sequence is that of Squalene synthase (Fdft1) from Rattus norvegicus (Rat).